We begin with the raw amino-acid sequence, 288 residues long: Homeobox protein Hox-B4a (288 aa).

The interval 10 to 136 (SNYVDPKFPP…ASSPASTRKD (127 aa)) is disordered. Residues 118 to 132 (CGQTPHSQGASSPAS) show a composition bias toward polar residues. Positions 139 to 144 (VYPWMK) match the Antp-type hexapeptide motif. The segment at residues 160 to 219 (PKRSRTAYTRQQVLELEKEFHYNRYLTRRRRVEIAHTLCLSERQIKIWFQNRRMKWKKDH) is a DNA-binding region (homeobox).

Belongs to the Antp homeobox family. Deformed subfamily.

Its subcellular location is the nucleus. Sequence-specific transcription factor which is part of a developmental regulatory system that provides cells with specific positional identities on the anterior-posterior axis. The sequence is that of Homeobox protein Hox-B4a (hoxb4a) from Takifugu rubripes (Japanese pufferfish).